A 245-amino-acid chain; its full sequence is 1-(5-phosphoribosyl)-5-[(5-phosphoribosylamino)methylideneamino] imidazole-4-carboxamide isomerase (245 aa).

Asp10 (proton acceptor) is an active-site residue. Asp135 (proton donor) is an active-site residue.

Belongs to the HisA/HisF family.

It is found in the cytoplasm. It catalyses the reaction 1-(5-phospho-beta-D-ribosyl)-5-[(5-phospho-beta-D-ribosylamino)methylideneamino]imidazole-4-carboxamide = 5-[(5-phospho-1-deoxy-D-ribulos-1-ylimino)methylamino]-1-(5-phospho-beta-D-ribosyl)imidazole-4-carboxamide. It functions in the pathway amino-acid biosynthesis; L-histidine biosynthesis; L-histidine from 5-phospho-alpha-D-ribose 1-diphosphate: step 4/9. The chain is 1-(5-phosphoribosyl)-5-[(5-phosphoribosylamino)methylideneamino] imidazole-4-carboxamide isomerase from Methanosarcina acetivorans (strain ATCC 35395 / DSM 2834 / JCM 12185 / C2A).